Here is a 365-residue protein sequence, read N- to C-terminus: D-alanine--D-alanine ligase (365 aa).

The region spanning 140 to 346 is the ATP-grasp domain; sequence KKILRRHGLQ…YSQLLTDLIY (207 aa). 173–228 contributes to the ATP binding site; it reads EKQLSYPIFVKPANLGSSVGISKVKNREELIQGIDLAVKYDMKCLAEEFIPGKEIE. The Mg(2+) site is built by D299, E313, and N315.

It belongs to the D-alanine--D-alanine ligase family. Requires Mg(2+) as cofactor. Mn(2+) is required as a cofactor.

Its subcellular location is the cytoplasm. It carries out the reaction 2 D-alanine + ATP = D-alanyl-D-alanine + ADP + phosphate + H(+). It functions in the pathway cell wall biogenesis; peptidoglycan biosynthesis. Functionally, cell wall formation. This Natranaerobius thermophilus (strain ATCC BAA-1301 / DSM 18059 / JW/NM-WN-LF) protein is D-alanine--D-alanine ligase.